The following is a 408-amino-acid chain: MLVEINPSKIYGKVKAPQSKSFGIRLVLYSLLKESKLDNLIPSDDVNVAINVVKQLGVSVEGTYFKREKELVTPKFLYFGGSATTLRMSIPILSVLGVDTIIDGDETLRKRPLNAIIKALEGSVSFSSSLLPTKISGKLKENFVRIEGGESSQYISGFIYAFSLVGGGEIEIIPPISSKSYIYLTIELLNSLGGNIKMKGNKIYVEKGDFKPYIGKVPGDYALASFYASSSIVSGGEIVIEDVYELPNFDGDHSIVNFYKMMGAESYVKDNKWIVKSSEKLNGIEVNVDDYPDLAPSIASLAPFSSSPTIIKGIKRLKTKESNRVVTISETLSKFGVKVEYDEDKIVIYPSEVKAGHVICPNDHRIAMLASVLSFKSGGTIEKAECVNKSNPNFWKDLISLNGRIIIR.

The 3-phosphoshikimate site is built by lysine 20, serine 21, and arginine 25. Lysine 20 provides a ligand contact to phosphoenolpyruvate. Residue arginine 111 participates in phosphoenolpyruvate binding. Residues serine 151, serine 152, glutamine 153, serine 178, aspartate 293, and lysine 320 each coordinate 3-phosphoshikimate. Glutamine 153 is a phosphoenolpyruvate binding site. Aspartate 293 acts as the Proton acceptor in catalysis. The phosphoenolpyruvate site is built by arginine 324, arginine 365, and lysine 389.

This sequence belongs to the EPSP synthase family. As to quaternary structure, monomer.

Its subcellular location is the cytoplasm. The catalysed reaction is 3-phosphoshikimate + phosphoenolpyruvate = 5-O-(1-carboxyvinyl)-3-phosphoshikimate + phosphate. Its pathway is metabolic intermediate biosynthesis; chorismate biosynthesis. Functionally, catalyzes the transfer of the enolpyruvyl moiety of phosphoenolpyruvate (PEP) to the 5-hydroxyl of shikimate-3-phosphate (S3P) to produce enolpyruvyl shikimate-3-phosphate and inorganic phosphate. The chain is 3-phosphoshikimate 1-carboxyvinyltransferase from Sulfurisphaera tokodaii (strain DSM 16993 / JCM 10545 / NBRC 100140 / 7) (Sulfolobus tokodaii).